The sequence spans 381 residues: Creatine kinase M-type (381 aa).

The Phosphagen kinase N-terminal domain maps to 11–98 (KLNYKPEEEY…FDPIIQDRHG (88 aa)). The 243-residue stretch at 125–367 (YVLSSRVRTG…KLMVEMEKKL (243 aa)) folds into the Phosphagen kinase C-terminal domain. Position 128-132 (128-132 (SSRVR)) interacts with ATP. At Ser164 the chain carries Phosphoserine. Residue Thr166 is modified to Phosphothreonine. Ser178 carries the post-translational modification Phosphoserine. Residue Thr180 is modified to Phosphothreonine. Position 191 (His191) interacts with ATP. Ser199 is modified (phosphoserine). The ATP site is built by Arg236 and Arg292. Phosphothreonine occurs at positions 313 and 322. Residues 320–325 (RGTGGV) and Asp335 each bind ATP. Phosphoserine is present on Ser372.

Belongs to the ATP:guanido phosphotransferase family. Dimer of identical or non-identical chains, which can be either B (brain type) or M (muscle type). With MM being the major form in skeletal muscle and myocardium, MB existing in myocardium, and BB existing in many tissues, especially brain.

The protein resides in the cytoplasm. The enzyme catalyses creatine + ATP = N-phosphocreatine + ADP + H(+). In terms of biological role, reversibly catalyzes the transfer of phosphate between ATP and various phosphogens (e.g. creatine phosphate). Creatine kinase isoenzymes play a central role in energy transduction in tissues with large, fluctuating energy demands, such as skeletal muscle, heart, brain and spermatozoa. The chain is Creatine kinase M-type (CKM) from Canis lupus familiaris (Dog).